Reading from the N-terminus, the 358-residue chain is Dynein axonemal assembly factor 10 (358 aa).

WD repeat units lie at residues 64–106 (EKPK…TPVY), 116–155 (NCID…TPVA), 163–206 (ETKR…VRWE), 208–250 (NIKN…PSKG), 258–298 (AHKS…QRSR), and 320–358 (LSTQ…LNKL).

In terms of assembly, interacts with PIH1D1; the interaction associates DNAAF10 with the R2TP complex. Interacts with several dynein axonemal assembly factors.

The protein resides in the dynein axonemal particle. In terms of biological role, key assembly factor specifically required for the stability of axonemal dynein heavy chains in cytoplasm. The sequence is that of Dynein axonemal assembly factor 10 (dnaaf10) from Xenopus tropicalis (Western clawed frog).